Here is a 94-residue protein sequence, read N- to C-terminus: Enhancer of yellow 2 transcription factor (94 aa).

Belongs to the ENY2 family. In terms of assembly, component of the nuclear pore complex (NPC)-associated AMEX complex (anchoring and mRNA export complex), composed of at least e(y)2 and xmas-2. Component of the SAGA transcription coactivator-HAT complexes, at least composed of Ada2b, e(y)2, Pcaf/Gcn5, Taf10 and Nipped-A/Trrap. Within the SAGA complex, e(y)2, Sgf11, and not/nonstop form an additional subcomplex of SAGA called the DUB module (deubiquitination module). Component of the THO complex, composed of at least e(y)2, HPR1, THO2, THOC5, THOC6 and THOC7. Interacts with e(y)1. Interacts with su(Hw) (via zinc fingers). Interacts with xmas-2; required for localization to the nuclear periphery. Interacts with the nuclear pore complex (NPC).

The protein localises to the nucleus. The protein resides in the nucleoplasm. Its subcellular location is the cytoplasm. In terms of biological role, involved in mRNA export coupled transcription activation by association with both the AMEX and the SAGA complexes. The SAGA complex is a multiprotein complex that activates transcription by remodeling chromatin and mediating histone acetylation and deubiquitination. Within the SAGA complex, participates in a subcomplex that specifically deubiquitinates histone H2B. The SAGA complex is recruited to specific gene promoters by activators, where it is required for transcription. Required for nuclear receptor-mediated transactivation. Involved in transcription elongation by recruiting the THO complex onto nascent mRNA. The AMEX complex functions in docking export-competent ribonucleoprotein particles (mRNPs) to the nuclear entrance of the nuclear pore complex (nuclear basket). AMEX participates in mRNA export and accurate chromatin positioning in the nucleus by tethering genes to the nuclear periphery. The sequence is that of Enhancer of yellow 2 transcription factor from Drosophila grimshawi (Hawaiian fruit fly).